The primary structure comprises 147 residues: Nucleoside diphosphate kinase (147 aa).

ATP contacts are provided by lysine 9, phenylalanine 57, arginine 85, threonine 91, arginine 102, and asparagine 112. Residue histidine 115 is the Pros-phosphohistidine intermediate of the active site.

Belongs to the NDK family. As to quaternary structure, homotetramer. Mg(2+) is required as a cofactor.

Its subcellular location is the cytoplasm. It catalyses the reaction a 2'-deoxyribonucleoside 5'-diphosphate + ATP = a 2'-deoxyribonucleoside 5'-triphosphate + ADP. The enzyme catalyses a ribonucleoside 5'-diphosphate + ATP = a ribonucleoside 5'-triphosphate + ADP. Its function is as follows. Major role in the synthesis of nucleoside triphosphates other than ATP. The ATP gamma phosphate is transferred to the NDP beta phosphate via a ping-pong mechanism, using a phosphorylated active-site intermediate. This Listeria monocytogenes serotype 4a (strain HCC23) protein is Nucleoside diphosphate kinase.